The following is a 37-amino-acid chain: Potassium channel toxin alpha-KTx 2.19 (37 aa).

Cystine bridges form between cysteine 7-cysteine 28, cysteine 13-cysteine 33, and cysteine 17-cysteine 35.

In terms of tissue distribution, expressed by the venom gland.

Its subcellular location is the secreted. Functionally, inhibitor of voltage-gated potassium channels. This is Potassium channel toxin alpha-KTx 2.19 from Rhopalurus junceus (Caribbean blue scorpion).